Consider the following 172-residue polypeptide: Bone marrow stromal antigen 2 (172 aa).

Over 1–26 the chain is Cytoplasmic; the sequence is MAPSFYHYLPVAMDERWEPKGWSIRR. Residue K20 forms a Glycyl lysine isopeptide (Lys-Gly) (interchain with G-Cter in ubiquitin) linkage. The helical; Signal-anchor for type II membrane protein transmembrane segment at 27 to 47 threads the bilayer; it reads WWLVAAILVVLIGVVLVCLIV. Topologically, residues 48–152 are extracellular; sequence YFANAAHSEA…EISTTVQVNS (105 aa). N-linked (GlcNAc...) asparagine glycans are attached at residues N70 and N97. Residues 103 to 149 adopt a coiled-coil conformation; that stretch reads LRDSLKKKVSQTQEQQARIKELENKIERLNQELENLRTQKEISTTVQ. S152 carries GPI-anchor amidated serine lipidation. Residues 153–172 constitute a propeptide, removed in mature form; sequence GGSVVVSSLLVLVAVLFLHF.

In terms of assembly, parallel homodimer; disulfide-linked. May form homotetramers under reducing conditions. Isoform 1 and isoform 2 form homodimers and also heterodimers with each other. Dimerization is essential for its antiviral activity. Interacts (via cytoplasmic domain) with ARHGAP44. Interacts with MMP14 (via C-terminal cytoplasmic tail). Interacts with LILRA4/ILT7. Interacts with RNF115. Post-translationally, N-glycosylated. In terms of processing, the GPI anchor is essential for its antiviral activity. Ubiquitously expressed, with highest levels in brain and liver. Present in liver (at protein level).

It localises to the golgi apparatus. The protein resides in the trans-Golgi network. The protein localises to the cell membrane. It is found in the late endosome. Its subcellular location is the membrane raft. It localises to the cytoplasm. The protein resides in the apical cell membrane. In terms of biological role, IFN-induced antiviral host restriction factor which efficiently blocks the release of diverse mammalian enveloped viruses by directly tethering nascent virions to the membranes of infected cells. Acts as a direct physical tether, holding virions to the cell membrane and linking virions to each other. The tethered virions can be internalized by endocytosis and subsequently degraded or they can remain on the cell surface. In either case, their spread as cell-free virions is restricted. Its target viruses belong to diverse families, including retroviridae: human immunodeficiency virus type 1 (HIV-1), mouse mammary tumor virus (MMTV) and murine leukemia virus (MLV), filoviridae: ebola virus (EBOV), arenaviridae: lassa virus (LASV), and rhabdoviridae: vesicular stomatitis virus (VSV). Can inhibit cell surface proteolytic activity of MMP14 causing decreased activation of MMP15 which results in inhibition of cell growth and migration. Can stimulate signaling by LILRA4/ILT7 and consequently provide negative feedback to the production of IFN by plasmacytoid dendritic cells in response to viral infection. Plays a role in the organization of the subapical actin cytoskeleton in polarized epithelial cells. The sequence is that of Bone marrow stromal antigen 2 (Bst2) from Rattus norvegicus (Rat).